A 185-amino-acid chain; its full sequence is Ribosome-recycling factor (185 aa).

Belongs to the RRF family.

Its subcellular location is the cytoplasm. Responsible for the release of ribosomes from messenger RNA at the termination of protein biosynthesis. May increase the efficiency of translation by recycling ribosomes from one round of translation to another. This is Ribosome-recycling factor from Clostridioides difficile (strain 630) (Peptoclostridium difficile).